A 395-amino-acid chain; its full sequence is Elongation factor Tu (395 aa).

Residues 10–204 (KTHANIGTIG…AVDSYIPTPE (195 aa)) enclose the tr-type G domain. The interval 19-26 (GHVDHGKT) is G1. 19-26 (GHVDHGKT) is a binding site for GTP. Thr26 serves as a coordination point for Mg(2+). The segment at 60–64 (GITIN) is G2. Positions 81 to 84 (DCPG) are G3. GTP is bound by residues 81 to 85 (DCPGH) and 136 to 139 (NKCD). Residues 136-139 (NKCD) are G4. Residues 174–176 (SAL) are G5.

Belongs to the TRAFAC class translation factor GTPase superfamily. Classic translation factor GTPase family. EF-Tu/EF-1A subfamily. Monomer.

The protein localises to the cytoplasm. It catalyses the reaction GTP + H2O = GDP + phosphate + H(+). In terms of biological role, GTP hydrolase that promotes the GTP-dependent binding of aminoacyl-tRNA to the A-site of ribosomes during protein biosynthesis. The chain is Elongation factor Tu from Lysinibacillus sphaericus (strain C3-41).